The chain runs to 525 residues: Glutamate--cysteine ligase (525 aa).

This sequence belongs to the glutamate--cysteine ligase type 1 family. Type 1 subfamily.

The catalysed reaction is L-cysteine + L-glutamate + ATP = gamma-L-glutamyl-L-cysteine + ADP + phosphate + H(+). Its pathway is sulfur metabolism; glutathione biosynthesis; glutathione from L-cysteine and L-glutamate: step 1/2. The protein is Glutamate--cysteine ligase of Pseudomonas putida (strain W619).